The chain runs to 217 residues: Large ribosomal subunit protein uL1 (217 aa).

It belongs to the universal ribosomal protein uL1 family. Component of the large ribosomal subunit (LSU). Mature N.crassa ribosomes consist of a small (40S) and a large (60S) subunit. The 40S small subunit contains 1 molecule of ribosomal RNA (18S rRNA) and at least 32 different proteins. The large 60S subunit contains 3 rRNA molecules (26S, 5.8S and 5S rRNA) and at least 42 different proteins. uL1 forms part of the L1 stalk.

The protein localises to the cytoplasm. Functionally, component of the ribosome, a large ribonucleoprotein complex responsible for the synthesis of proteins in the cell. The small ribosomal subunit (SSU) binds messenger RNAs (mRNAs) and translates the encoded message by selecting cognate aminoacyl-transfer RNA (tRNA) molecules. The large subunit (LSU) contains the ribosomal catalytic site termed the peptidyl transferase center (PTC), which catalyzes the formation of peptide bonds, thereby polymerizing the amino acids delivered by tRNAs into a polypeptide chain. The nascent polypeptides leave the ribosome through a tunnel in the LSU and interact with protein factors that function in enzymatic processing, targeting, and the membrane insertion of nascent chains at the exit of the ribosomal tunnel. uL1 forms part of the L1 stalk, a mobile element that plays a role in evacuating the exit-site tRNA. The polypeptide is Large ribosomal subunit protein uL1 (crp-74) (Neurospora crassa (strain ATCC 24698 / 74-OR23-1A / CBS 708.71 / DSM 1257 / FGSC 987)).